The following is a 169-amino-acid chain: Inorganic pyrophosphatase (169 aa).

An N-formylmethionine modification is found at Met-1. Residues Lys-28, Arg-42, and Tyr-54 each contribute to the substrate site. Residues Asp-64, Asp-69, and Asp-101 each coordinate Mg(2+). Tyr-138 contributes to the substrate binding site.

This sequence belongs to the PPase family. Homohexamer. Requires Mg(2+) as cofactor.

Its subcellular location is the cytoplasm. It carries out the reaction diphosphate + H2O = 2 phosphate + H(+). Its activity is regulated as follows. Inhibited by ATP, but not by fructose 1,6-bisphosphate or 2-phosphoglycerate. Hydrolyzes PPi generated in anabolic reactions. Functionally, catalyzes the hydrolysis of inorganic pyrophosphate (PPi) forming two phosphate ions. This is Inorganic pyrophosphatase from Synechocystis sp. (strain ATCC 27184 / PCC 6803 / Kazusa).